Reading from the N-terminus, the 251-residue chain is PF03932 family protein CutC (251 aa).

Belongs to the CutC family.

It localises to the cytoplasm. This is PF03932 family protein CutC from Bacteroides fragilis (strain ATCC 25285 / DSM 2151 / CCUG 4856 / JCM 11019 / LMG 10263 / NCTC 9343 / Onslow / VPI 2553 / EN-2).